A 202-amino-acid chain; its full sequence is Type II restriction enzyme MunI (202 aa).

In terms of assembly, homodimer.

The enzyme catalyses Endonucleolytic cleavage of DNA to give specific double-stranded fragments with terminal 5'-phosphates.. Its function is as follows. A P subtype restriction enzyme that recognizes the double-stranded sequence 5'-CAATTG-3' and cleaves after C-1. In Mycoplasma sp, this protein is Type II restriction enzyme MunI.